An 832-amino-acid chain; its full sequence is Translation initiation factor IF-2 (832 aa).

A disordered region spans residues 1–249 (MSDDNDKPRT…GGGSSAPREK (249 aa)). Residues 53–71 (TPAPAPEPAPEPAPAPAPA) are compositionally biased toward pro residues. Basic and acidic residues predominate over residues 89 to 144 (PQERVARLQREAEEERLKLAEDARKRDDQKAKQNADDEKKRQEENKKAEEEAEKQA). Residues 145 to 156 (AAEAEAAAAAEA) show a composition bias toward low complexity. Residues 180–200 (PEPKRPEKKKEEKKPARGGAK) are compositionally biased toward basic and acidic residues. The region spanning 333–503 (PRPPVVTIMG…ELQAELLELK (171 aa)) is the tr-type G domain. A G1 region spans residues 342 to 349 (GHVDHGKT). 342–349 (GHVDHGKT) serves as a coordination point for GTP. A G2 region spans residues 367 to 371 (GITQH). Positions 389-392 (DTPG) are G3. GTP-binding positions include 389-393 (DTPGH) and 443-446 (NKCD). The segment at 443–446 (NKCD) is G4. The interval 479–481 (SAT) is G5.

This sequence belongs to the TRAFAC class translation factor GTPase superfamily. Classic translation factor GTPase family. IF-2 subfamily.

Its subcellular location is the cytoplasm. In terms of biological role, one of the essential components for the initiation of protein synthesis. Protects formylmethionyl-tRNA from spontaneous hydrolysis and promotes its binding to the 30S ribosomal subunits. Also involved in the hydrolysis of GTP during the formation of the 70S ribosomal complex. This chain is Translation initiation factor IF-2, found in Erythrobacter litoralis (strain HTCC2594).